The chain runs to 668 residues: Fructose-1,6-bisphosphatase class 3 (668 aa).

Belongs to the FBPase class 3 family. Mn(2+) is required as a cofactor.

The catalysed reaction is beta-D-fructose 1,6-bisphosphate + H2O = beta-D-fructose 6-phosphate + phosphate. It functions in the pathway carbohydrate biosynthesis; gluconeogenesis. This chain is Fructose-1,6-bisphosphatase class 3, found in Clostridium botulinum (strain Okra / Type B1).